The chain runs to 157 residues: Protein Smg (157 aa).

The protein belongs to the Smg family.

The polypeptide is Protein Smg (Buchnera aphidicola subsp. Acyrthosiphon pisum (strain Tuc7)).